Consider the following 1427-residue polypeptide: DNA-directed RNA polymerase subunit beta' (1427 aa).

Cys-70, Cys-72, Cys-85, and Cys-88 together coordinate Zn(2+). Mg(2+)-binding residues include Asp-461, Asp-463, and Asp-465. Zn(2+)-binding residues include Cys-838, Cys-912, Cys-919, and Cys-922.

It belongs to the RNA polymerase beta' chain family. As to quaternary structure, the RNAP catalytic core consists of 2 alpha, 1 beta, 1 beta' and 1 omega subunit. When a sigma factor is associated with the core the holoenzyme is formed, which can initiate transcription. The cofactor is Mg(2+). It depends on Zn(2+) as a cofactor.

The catalysed reaction is RNA(n) + a ribonucleoside 5'-triphosphate = RNA(n+1) + diphosphate. DNA-dependent RNA polymerase catalyzes the transcription of DNA into RNA using the four ribonucleoside triphosphates as substrates. The chain is DNA-directed RNA polymerase subunit beta' from Sorangium cellulosum (strain So ce56) (Polyangium cellulosum (strain So ce56)).